Here is a 145-residue protein sequence, read N- to C-terminus: Transcription antitermination protein NusB (145 aa).

It belongs to the NusB family.

Involved in transcription antitermination. Required for transcription of ribosomal RNA (rRNA) genes. Binds specifically to the boxA antiterminator sequence of the ribosomal RNA (rrn) operons. The protein is Transcription antitermination protein NusB of Burkholderia cenocepacia (strain HI2424).